The primary structure comprises 71 residues: Large ribosomal subunit protein bL31 (71 aa).

4 residues coordinate Zn(2+): C16, C18, C37, and C40.

This sequence belongs to the bacterial ribosomal protein bL31 family. Type A subfamily. Part of the 50S ribosomal subunit. Requires Zn(2+) as cofactor.

Functionally, binds the 23S rRNA. The protein is Large ribosomal subunit protein bL31 of Pseudoalteromonas translucida (strain TAC 125).